Here is a 474-residue protein sequence, read N- to C-terminus: DNA-binding protein (474 aa).

Residues 1–34 are disordered; that stretch reads MAGRQREHPTVTPYLQETSPERPPPLPPKKKLRK. Tyr142 is modified (phosphotyrosine; by host). Residues Cys231 and His233 each coordinate Zn(2+). The segment at 244–278 is flexible loop; sequence VEVDVGSENGQRALKEQPSKTKVVQNRWGRSVVQI. Residues Cys286, Cys302, Cys343, Cys345, Cys397, and Cys413 each coordinate Zn(2+). The interval 460–474 is C-terminal arm, DBP binding; it reads VALPTGHGDAEVEPF.

The protein belongs to the adenoviridae E2A DNA-binding protein family. Homomultimerizes on viral ssDNA bound to pTP. Forms a initiation complex with viral polymerase, pTP and hosts NFIA and POU2F1/OCT1. Interacts with host SRCAP.

Its subcellular location is the host nucleus. Plays a role in the elongation phase of viral strand displacement replication by unwinding the template in an ATP-independent fashion, employing its capacity to form multimers. Also enhances the rate of initiation. Released from template upon second strand synthesis. Assembles in complex with viral pTP, viral pol, host NFIA and host POU2F1/OCT1 on viral origin of replication. Covers the whole ssDNA genome during synthesis. The complementary strand synthesis induces its relese from DNA template. May inhibit cellular transcription mediated by the interaction between host SRCAP and CBP. This is DNA-binding protein from Homo sapiens (Human).